Consider the following 244-residue polypeptide: NAD-dependent protein deacetylase (244 aa).

The region spanning 1–244 (MTGEQLAHWI…LSAVQRAVMP (244 aa)) is the Deacetylase sirtuin-type domain. Positions 22, 26, 33, 34, 103, 105, 106, and 121 each coordinate NAD(+). F33 provides a ligand contact to nicotinamide. 2 residues coordinate nicotinamide: I105 and D106. H121 (proton acceptor) is an active-site residue. Residues C129, C132, C150, and C152 each coordinate Zn(2+). Positions 190, 191, 213, and 231 each coordinate NAD(+).

It belongs to the sirtuin family. Class U subfamily. Zn(2+) is required as a cofactor.

It is found in the cytoplasm. The enzyme catalyses N(6)-acetyl-L-lysyl-[protein] + NAD(+) + H2O = 2''-O-acetyl-ADP-D-ribose + nicotinamide + L-lysyl-[protein]. In terms of biological role, NAD-dependent protein deacetylase which modulates the activities of several enzymes which are inactive in their acetylated form. In Cutibacterium acnes (strain DSM 16379 / KPA171202) (Propionibacterium acnes), this protein is NAD-dependent protein deacetylase.